The following is a 365-amino-acid chain: Alanine racemase (365 aa).

Residue Lys36 is the Proton acceptor; specific for D-alanine of the active site. The residue at position 36 (Lys36) is an N6-(pyridoxal phosphate)lysine. A substrate-binding site is contributed by Arg132. Catalysis depends on Tyr257, which acts as the Proton acceptor; specific for L-alanine. Met305 lines the substrate pocket.

The protein belongs to the alanine racemase family. Pyridoxal 5'-phosphate serves as cofactor.

The enzyme catalyses L-alanine = D-alanine. It participates in amino-acid biosynthesis; D-alanine biosynthesis; D-alanine from L-alanine: step 1/1. Catalyzes the interconversion of L-alanine and D-alanine. May also act on other amino acids. The polypeptide is Alanine racemase (alr) (Xylella fastidiosa (strain Temecula1 / ATCC 700964)).